Here is a 405-residue protein sequence, read N- to C-terminus: Ubiquitin-like modifier-activating enzyme 5 (405 aa).

The interval 1-44 (MATVEELQTRVKQLEEELERERTRNRGGTDGGGGRKKIDQMSSE) is disordered. A compositionally biased stretch (basic and acidic residues) spans 7-24 (LQTRVKQLEEELERERTR). ATP-binding residues include Gly81, Asp102, Lys125, Asn148, and Asn182. Positions 224 and 227 each coordinate Zn(2+). Cys248 (glycyl thioester intermediate) is an active-site residue. Positions 301 and 306 each coordinate Zn(2+). Residues 346–377 (AETTEEELKAASHGHVPELVEGVHVAYVRPMT) form a linker region. Positions 390-405 (DDQESLEDLMAKMKSI) match the UFC1-binding sequence (UFC) motif.

It belongs to the ubiquitin-activating E1 family. UBA5 subfamily. Homodimer; homodimerization is required for UFM1 activation. Interacts (via UIS motif) with UFM1; binds UFM1 via a trans-binding mechanism in which UFM1 interacts with distinct sites in both subunits of the UBA5 homodimer. Interacts (via C-terminus) with UFC1.

The protein localises to the cytoplasm. Its subcellular location is the nucleus. The protein resides in the endoplasmic reticulum membrane. It localises to the golgi apparatus. Functionally, E1-like enzyme which specifically catalyzes the first step in ufmylation. Activates UFM1 by first adenylating its C-terminal glycine residue with ATP, and thereafter linking this residue to the side chain of a cysteine residue in E1, yielding a UFM1-E1 thioester and free AMP. Activates UFM1 via a trans-binding mechanism, in which UFM1 interacts with distinct sites in both subunits of the UBA5 homodimer. Trans-binding also promotes stabilization of the UBA5 homodimer, and enhances ATP-binding. Transfer of UFM1 from UBA5 to the E2-like enzyme UFC1 also takes place using a trans mechanism. The chain is Ubiquitin-like modifier-activating enzyme 5 from Branchiostoma floridae (Florida lancelet).